An 868-amino-acid polypeptide reads, in one-letter code: Pro-neuregulin-2, membrane-bound isoform (868 aa).

The tract at residues 1-114 (MRQVCCSALP…AAGGMRRDPA (114 aa)) is disordered. A propeptide spanning residues 1 to 127 (MRQVCCSALP…SMLLFGVSLA (127 aa)) is cleaved from the precursor. Over residues 19-75 (SSYSYSDSSSSSSSNNSSSSTSSRSSSRSSSRSSRGSTTTTSSSENSGSNSGSIFRP) the composition is skewed to low complexity. N-linked (GlcNAc...) asparagine glycosylation is found at Asn-33 and Asn-34. Over residues 76 to 90 (AAPPEPRPQPQPQPR) the composition is skewed to pro residues. Low complexity predominate over residues 91 to 108 (SPAARRAAARSRAAAAGG). Over 128-429 (CYSPSLKSVQ…KEAEELYQKR (302 aa)) the chain is Extracellular. 3 N-linked (GlcNAc...) asparagine glycosylation sites follow: Asn-163, Asn-294, and Asn-362. The Ig-like C2-type domain maps to 253 to 348 (PKLKKMKSQT…RGRLHVNSVS (96 aa)). 4 disulfide bridges follow: Cys-273-Cys-327, Cys-361-Cys-375, Cys-369-Cys-386, and Cys-388-Cys-397. Positions 357–398 (HARKCNETAKSYCVNGGVCYYIEGINQLSCKCPNGFFGQRCL) constitute an EGF-like domain. The helical transmembrane segment at 430 to 450 (VLTITGICVALLVVGIVCVVA) threads the bilayer. At 451–868 (YCKTKKQRRQ…TRAKQDSGPL (418 aa)) the chain is on the cytoplasmic side. Disordered regions lie at residues 469-488 (MCPA…PRLD), 516-553 (TFSG…SESL), 671-690 (LLRH…DMQR), 720-806 (ASPF…DGAL), and 823-868 (LRSD…SGPL). Residues 518–530 (SGSHSCSPSHHCS) are compositionally biased toward low complexity. Basic and acidic residues predominate over residues 538–551 (HRHESHTWSLERSE). Residues 766 to 794 (LNGLAAQRARAARDSLSLSSGSGCGSASA) are compositionally biased toward low complexity.

This sequence belongs to the neuregulin family. As to quaternary structure, interacts with ERBB3 and ERBB4. Post-translationally, proteolytic cleavage close to the plasma membrane on the external face leads to the release of the soluble growth factor form. In terms of processing, extensive glycosylation precedes the proteolytic cleavage. Expressed in most parts of the brain, especially the olfactory bulb and cerebellum where it localizes in granule and Purkinje cells. In the hippocampus, found in the granule cells of the dentate gyrus. In the basal forebrain, found in the cholinergic cells. In the hindbrain, weakly detectable in the motor trigeminal nucleus. Not detected in the hypothalamus. Also found in the liver and in the thymus. Not detected in heart, adrenal gland, or testis.

The protein resides in the cell membrane. It is found in the secreted. In terms of biological role, direct ligand for ERBB3 and ERBB4 tyrosine kinase receptors. Concomitantly recruits ERBB1 and ERBB2 coreceptors, resulting in ligand-stimulated tyrosine phosphorylation and activation of the ERBB receptors. May also promote the heterodimerization with the EGF receptor. In Rattus norvegicus (Rat), this protein is Pro-neuregulin-2, membrane-bound isoform (Nrg2).